We begin with the raw amino-acid sequence, 56 residues long: TAEDSRGTQLHRALRKATKLPVSTRCITPGTRCKVPSQCCRGPCKNGRCTPSPSEW.

Positions 1–2 (TA) are cleaved as a signal peptide. Residues 3–25 (EDSRGTQLHRALRKATKLPVSTR) constitute a propeptide that is removed on maturation. Intrachain disulfides connect Cys26-Cys40, Cys33-Cys44, and Cys39-Cys49.

It belongs to the conotoxin O1 superfamily. Expressed by the venom duct.

Its subcellular location is the secreted. The chain is Conotoxin Bu12 from Conus bullatus (Bubble cone).